Reading from the N-terminus, the 59-residue chain is MSAGLKITLIKSQIGAPTAQKAVLNGMGLNKLNKTVVLKNTPEIVGMIAKVSHMVKVEE.

This sequence belongs to the universal ribosomal protein uL30 family. In terms of assembly, part of the 50S ribosomal subunit.

This is Large ribosomal subunit protein uL30 from Geobacter metallireducens (strain ATCC 53774 / DSM 7210 / GS-15).